The following is a 347-amino-acid chain: Metacaspase-2 (347 aa).

Residues methionine 1–glycine 70 form a regulates substrate access to the active site region. The active site involves histidine 158. Ca(2+)-binding residues include aspartate 173, aspartate 189, and aspartate 190. Residue cysteine 213 is part of the active site. Aspartate 220 is a binding site for Ca(2+).

It belongs to the peptidase C14B family. As to quaternary structure, monomer. In terms of processing, auto-proteolytic cleavage of the propeptide after Lys-55 and between the large and small subunits after Lys-268 is required for catalytic activity towards large protein substrates but is dispensable towards small oligopeptide substrates. After processing, the propeptide and the large and small subunits remain associated by non-covalent bonds. In vivo, the unprocessed enzyme appears to be the predominant form.

The protein localises to the recycling endosome. Its activity is regulated as follows. Activated by Ca(2+). In response to calcium binding, the 280-loop, the 280-loop, a disordered loop consisting of residues 269-275, undergoes a conformational change which stabilizes substrates in the active site. The binding to the substrate triggers the release of the N-terminal region resulting in the activation of the enzyme. Proteolytic cleavage is required for catalytic activity towards large protein substrates. Functionally, cysteine protease that cleaves specifically after arginine or lysine residues. The polypeptide is Metacaspase-2 (Trypanosoma brucei brucei).